The sequence spans 575 residues: Lysine--tRNA ligase (575 aa).

Mg(2+)-binding residues include glutamate 412 and glutamate 419.

It belongs to the class-II aminoacyl-tRNA synthetase family. In terms of assembly, homodimer. It depends on Mg(2+) as a cofactor.

The protein localises to the cytoplasm. The enzyme catalyses tRNA(Lys) + L-lysine + ATP = L-lysyl-tRNA(Lys) + AMP + diphosphate. This chain is Lysine--tRNA ligase, found in Bacteroides fragilis (strain YCH46).